Reading from the N-terminus, the 313-residue chain is Isoaspartyl peptidase (313 aa).

Thr-179 (nucleophile) is an active-site residue. Substrate contacts are provided by residues 207-210 and 230-233; these read RVGD and TGTG.

Belongs to the Ntn-hydrolase family. In terms of assembly, heterotetramer of two alpha and two beta chains arranged as a dimer of alpha/beta heterodimers. In terms of processing, autocleaved. Generates the alpha and beta subunits. The beta subunit is thought to be responsible for the nucleophile hydrolase activity.

The catalysed reaction is Cleavage of a beta-linked Asp residue from the N-terminus of a polypeptide.. Its function is as follows. Degrades proteins damaged by L-isoaspartyl residue formation (also known as beta-Asp residues). Degrades L-isoaspartyl-containing di- and tripeptides. Acts best on iso-Asp-Leu, followed by iso-Asp-Ala, -His and to a lesser extent iso-Asp-Lys, -Phe and iso-Asp-Leu-Ala. Does not act on internal iso-Asp bonds (Als-iso-Asp-Leu-Ala). Does not act on alpha-Asp bonds. Has poor L-asparaginase activity. The chain is Isoaspartyl peptidase (iaaA) from Salmonella typhimurium (strain LT2 / SGSC1412 / ATCC 700720).